We begin with the raw amino-acid sequence, 374 residues long: Ribosomal RNA large subunit methyltransferase G (374 aa).

The protein belongs to the methyltransferase superfamily. RlmG family.

The protein localises to the cytoplasm. It carries out the reaction guanosine(1835) in 23S rRNA + S-adenosyl-L-methionine = N(2)-methylguanosine(1835) in 23S rRNA + S-adenosyl-L-homocysteine + H(+). In terms of biological role, specifically methylates the guanine in position 1835 (m2G1835) of 23S rRNA. The chain is Ribosomal RNA large subunit methyltransferase G from Ectopseudomonas mendocina (strain ymp) (Pseudomonas mendocina).